We begin with the raw amino-acid sequence, 801 residues long: U-box domain-containing protein 34 (801 aa).

A disordered region spans residues Arg-205–Val-309. The span at Leu-236 to Thr-254 shows a compositional bias: polar residues. A compositionally biased stretch (basic and acidic residues) spans Val-289 to Val-309. Positions Glu-301–Glu-395 form a coiled coil. One can recognise a Protein kinase domain in the interval Phe-442–Leu-705. ATP-binding positions include Ile-448–Val-456 and Lys-469. Catalysis depends on Asp-564, which acts as the Proton acceptor. Residues Arg-724–Ser-797 form the U-box domain.

Belongs to the protein kinase superfamily. Ser/Thr protein kinase family.

The catalysed reaction is L-seryl-[protein] + ATP = O-phospho-L-seryl-[protein] + ADP + H(+). The enzyme catalyses L-threonyl-[protein] + ATP = O-phospho-L-threonyl-[protein] + ADP + H(+). It catalyses the reaction S-ubiquitinyl-[E2 ubiquitin-conjugating enzyme]-L-cysteine + [acceptor protein]-L-lysine = [E2 ubiquitin-conjugating enzyme]-L-cysteine + N(6)-ubiquitinyl-[acceptor protein]-L-lysine.. It functions in the pathway protein modification; protein ubiquitination. Functions as an E3 ubiquitin ligase. In Arabidopsis thaliana (Mouse-ear cress), this protein is U-box domain-containing protein 34 (PUB34).